The chain runs to 142 residues: Small ribosomal subunit protein uS12 (142 aa).

The protein belongs to the universal ribosomal protein uS12 family. In terms of assembly, part of the 30S ribosomal subunit.

Functionally, with S4 and S5 plays an important role in translational accuracy. Located at the interface of the 30S and 50S subunits. This Methanosarcina mazei (strain ATCC BAA-159 / DSM 3647 / Goe1 / Go1 / JCM 11833 / OCM 88) (Methanosarcina frisia) protein is Small ribosomal subunit protein uS12.